Reading from the N-terminus, the 111-residue chain is Large ribosomal subunit protein uL22 (111 aa).

The protein belongs to the universal ribosomal protein uL22 family. As to quaternary structure, part of the 50S ribosomal subunit.

Functionally, this protein binds specifically to 23S rRNA; its binding is stimulated by other ribosomal proteins, e.g. L4, L17, and L20. It is important during the early stages of 50S assembly. It makes multiple contacts with different domains of the 23S rRNA in the assembled 50S subunit and ribosome. The globular domain of the protein is located near the polypeptide exit tunnel on the outside of the subunit, while an extended beta-hairpin is found that lines the wall of the exit tunnel in the center of the 70S ribosome. This Xanthomonas euvesicatoria pv. vesicatoria (strain 85-10) (Xanthomonas campestris pv. vesicatoria) protein is Large ribosomal subunit protein uL22.